The following is a 425-amino-acid chain: MNIISVGVNHKTAPIEIRERISLSEVQNKEFITGLISSGLAHEAMVVSTCNRTELYVVPAIYEVNGEFLKEYLISFKDARKEVRPEHFFSRFYCGTARHIFEVASAIDSLVLGEGQILGQVKNAYRIAAETQCAGILITRLCHTAFSVAKKVKTKTKIMEGAVSVSYAAVELAQKIFSNLSMKKVLLVGAGETGELAAKHMFQKNARNIVITNRTLSKAETLAEELGTNKVLPFETFREHLHEFDIIITAISTKEYVLNEAEMHQSMIKRRLKPVIILDLGLPRNVDPDVSKLQNMFLKDIDALKHIIDKNLEKRSRELPKVNAIIEEELIAFGQWINTLKVRPTIVDLQSKFIEIKEKELERYRYKVSEEELQRMEHLTDRILKKILHHPIKMLKAPIDTTDSIPSRVNLVRNVFDLEEPNQSH.

Substrate-binding positions include 49-52 (TCNR), Ser109, 114-116 (EGQ), and Gln120. Cys50 functions as the Nucleophile in the catalytic mechanism. 189–194 (GAGETG) lines the NADP(+) pocket.

This sequence belongs to the glutamyl-tRNA reductase family. As to quaternary structure, homodimer.

It carries out the reaction (S)-4-amino-5-oxopentanoate + tRNA(Glu) + NADP(+) = L-glutamyl-tRNA(Glu) + NADPH + H(+). It functions in the pathway porphyrin-containing compound metabolism; protoporphyrin-IX biosynthesis; 5-aminolevulinate from L-glutamyl-tRNA(Glu): step 1/2. Its pathway is porphyrin-containing compound metabolism; chlorophyll biosynthesis. Functionally, catalyzes the NADPH-dependent reduction of glutamyl-tRNA(Glu) to glutamate 1-semialdehyde (GSA). In Pelodictyon phaeoclathratiforme (strain DSM 5477 / BU-1), this protein is Glutamyl-tRNA reductase.